The sequence spans 473 residues: Sulfate adenylyltransferase subunit 1 (473 aa).

One can recognise a tr-type G domain in the interval 19 to 238; it reads KTLLKFLTCG…IKIKNSISSE (220 aa). The G1 stretch occupies residues 28-35; sequence GSVDDGKS. 28–35 is a GTP binding site; the sequence is GSVDDGKS. The tract at residues 86–90 is G2; it reads GITID. Positions 107–110 are G3; the sequence is DTPG. GTP-binding positions include 107 to 111 and 162 to 165; these read DTPGH and NKMD. The tract at residues 162–165 is G4; it reads NKMD. Positions 200–202 are G5; sequence SAL.

This sequence belongs to the TRAFAC class translation factor GTPase superfamily. Classic translation factor GTPase family. CysN/NodQ subfamily. In terms of assembly, heterodimer composed of CysD, the smaller subunit, and CysN.

The catalysed reaction is sulfate + ATP + H(+) = adenosine 5'-phosphosulfate + diphosphate. It functions in the pathway sulfur metabolism; hydrogen sulfide biosynthesis; sulfite from sulfate: step 1/3. In terms of biological role, with CysD forms the ATP sulfurylase (ATPS) that catalyzes the adenylation of sulfate producing adenosine 5'-phosphosulfate (APS) and diphosphate, the first enzymatic step in sulfur assimilation pathway. APS synthesis involves the formation of a high-energy phosphoric-sulfuric acid anhydride bond driven by GTP hydrolysis by CysN coupled to ATP hydrolysis by CysD. The chain is Sulfate adenylyltransferase subunit 1 from Buchnera aphidicola subsp. Acyrthosiphon pisum (strain APS) (Acyrthosiphon pisum symbiotic bacterium).